The chain runs to 400 residues: Phosphoglycerate kinase (400 aa).

Residues 21–23, Arg36, 59–62, Arg114, and Arg147 each bind substrate; these read DLN and HLGR. Residues Lys202, Glu329, and 355–358 each bind ATP; that span reads GGDT.

The protein belongs to the phosphoglycerate kinase family. In terms of assembly, monomer.

It is found in the cytoplasm. It carries out the reaction (2R)-3-phosphoglycerate + ATP = (2R)-3-phospho-glyceroyl phosphate + ADP. Its pathway is carbohydrate degradation; glycolysis; pyruvate from D-glyceraldehyde 3-phosphate: step 2/5. This Psychrobacter cryohalolentis (strain ATCC BAA-1226 / DSM 17306 / VKM B-2378 / K5) protein is Phosphoglycerate kinase.